Consider the following 218-residue polypeptide: Thiopurine S-methyltransferase (218 aa).

Residues Trp-10, Leu-45, Glu-66, and Arg-123 each coordinate S-adenosyl-L-methionine.

This sequence belongs to the class I-like SAM-binding methyltransferase superfamily. TPMT family.

The protein localises to the cytoplasm. The enzyme catalyses S-adenosyl-L-methionine + a thiopurine = S-adenosyl-L-homocysteine + a thiopurine S-methylether.. The sequence is that of Thiopurine S-methyltransferase from Shewanella denitrificans (strain OS217 / ATCC BAA-1090 / DSM 15013).